The following is a 218-amino-acid chain: Glutathione S-transferase Mu 2 (218 aa).

The region spanning 2-88 is the GST N-terminal domain; it reads PIILGYWNIR…YIARKHNLCG (87 aa). Glutathione is bound at residue 7–8; that stretch reads YW. S27 and S44 each carry phosphoserine. Glutathione contacts are provided by residues 43-46, K50, 59-60, and 72-73; these read RSQW, NL, and QS. Residues 90–208 enclose the GST C-terminal domain; the sequence is TEKEKIQEDI…KSSRFLPRPV (119 aa). A substrate-binding site is contributed by Y116.

Belongs to the GST superfamily. Mu family. Homodimer.

The protein localises to the cytoplasm. It carries out the reaction RX + glutathione = an S-substituted glutathione + a halide anion + H(+). The enzyme catalyses 11(S)-hydroxy-14(S),15(S)-epoxy-(5Z,8Z,12E)-eicosatrienoate + glutathione = (11S,15S)-dihydroxy-14(R)-S-glutathionyl-(5Z,8Z,12E)-eicosatrienoate. In terms of biological role, conjugation of reduced glutathione to a wide number of exogenous and endogenous hydrophobic electrophiles. Participates in the formation of novel hepoxilin regioisomers. The chain is Glutathione S-transferase Mu 2 (GSTM2) from Pongo abelii (Sumatran orangutan).